A 411-amino-acid chain; its full sequence is Multidrug resistance protein MdtG (411 aa).

11 helical membrane passes run 17-37 (LFVA…VMPF), 59-79 (LVFS…GGLA), 92-112 (ALGM…WQFL), 116-136 (AVLG…ATQV), 147-167 (WLST…GLLA), 174-194 (PVFF…LFAV), 222-242 (VLTL…IAPI), 257-277 (LAFV…ISAP), 291-311 (ILVA…MVQN), 320-340 (FLLG…LIYN), and 379-399 (AVFV…WITL).

It belongs to the major facilitator superfamily. DHA1 family. MdtG (TC 2.A.1.2.20) subfamily.

The protein resides in the cell inner membrane. This chain is Multidrug resistance protein MdtG, found in Erwinia billingiae (strain Eb661).